The sequence spans 422 residues: Putidaredoxin reductase CamA (422 aa).

Residues Ala15, Asp37, Lys50, Val83, and Arg134 each coordinate FAD. Position 156–165 (156–165 (GGGYIGLEVA)) interacts with NAD(+). The FAD site is built by Asp284 and Val302.

This sequence belongs to the FAD-dependent oxidoreductase family. Homodimer or monomer. Requires FAD as cofactor.

The catalysed reaction is 2 reduced [2Fe-2S]-[putidaredoxin] + NAD(+) + H(+) = 2 oxidized [2Fe-2S]-[putidaredoxin] + NADH. The protein operates within terpene metabolism; (R)-camphor degradation. The oxidation of camphor by cytochrome P450-CAM CamC requires the participation of the flavoprotein, putidaredoxin reductase CamA, and the iron-sulfur protein, putidaredoxin CamB, to mediate the transfer of electrons from NADH to P450 for oxygen activation. The polypeptide is Putidaredoxin reductase CamA (Pseudomonas putida (Arthrobacter siderocapsulatus)).